The primary structure comprises 1290 residues: Nonribosomal peptide synthetase 6 (1290 aa).

The tract at residues 1-27 is disordered; sequence MTAIDVPWLSTPRRDNSHGTRSNSSCQ. An adenylation region spans residues 260–657; that stretch reads SYQELDCQAS…AQVEHHLRSC (398 aa). The region spanning 775–851 is the Carrier domain; sequence APETELERKL…GLAQTHRHPV (77 aa). S812 carries the O-(pantetheine 4'-phosphoryl)serine modification. The segment at 846–870 is disordered; that stretch reads THRHPVRRAEVPRSSHDPDPFGRVR. Residues 852 to 870 are compositionally biased toward basic and acidic residues; the sequence is RRAEVPRSSHDPDPFGRVR. Residues 914-1162 are condensation; it reads GGQLDPEQLR…PCMNIIPVRV (249 aa).

It belongs to the NRP synthetase family.

In terms of biological role, nonribosomal peptide synthesis (NRPS) is a key mechanism responsible for the biosynthesis of bioactive metabolites which are potentially contributing to organismal virulence. The sequence is that of Nonribosomal peptide synthetase 6 (NRPS6) from Aspergillus fumigatus (strain ATCC MYA-4609 / CBS 101355 / FGSC A1100 / Af293) (Neosartorya fumigata).